The sequence spans 394 residues: Carbamoyltransferase HypF homolog (394 aa).

It belongs to the carbamoyltransferase HypF family.

The sequence is that of Carbamoyltransferase HypF homolog (hypF1) from Cupriavidus necator (strain ATCC 17699 / DSM 428 / KCTC 22496 / NCIMB 10442 / H16 / Stanier 337) (Ralstonia eutropha).